The primary structure comprises 1074 residues: Zinc finger protein 518B (1074 aa).

Over residues 12 to 24 (HLNGGHNSLTMSP) the composition is skewed to polar residues. A disordered region spans residues 12–36 (HLNGGHNSLTMSPKQPDANGAPRPN). 2 C2H2-type zinc fingers span residues 162–184 (FICSHCSYISYTKGEFQRHLVKH) and 190–213 (YQCEYCDYGAIRNDYIVKHTKRVH). Residues K482, K491, and K558 each participate in a glycyl lysine isopeptide (Lys-Gly) (interchain with G-Cter in SUMO2) cross-link. The disordered stretch occupies residues 568-590 (SNRKQEDNQTEEHKAVSTVGQIS). Positions 570–582 (RKQEDNQTEEHKA) are enriched in basic and acidic residues. A Glycyl lysine isopeptide (Lys-Gly) (interchain with G-Cter in SUMO2) cross-link involves residue K594. Disordered regions lie at residues 603 to 632 (TGEDRSQQPGDKPLELKNSERTNNTNDGPV) and 678 to 704 (KPSSLASNSAHRRSVGQASKGTSKATS). Positions 604-622 (GEDRSQQPGDKPLELKNSE) are enriched in basic and acidic residues. Over residues 693–704 (GQASKGTSKATS) the composition is skewed to polar residues. Residues K809, K846, and K860 each participate in a glycyl lysine isopeptide (Lys-Gly) (interchain with G-Cter in SUMO2) cross-link. The C2H2-type 3 zinc-finger motif lies at 1036 to 1058 (FKCWFCGRLYEDQEEWMSHGQRH).

This sequence belongs to the krueppel C2H2-type zinc-finger protein family.

It localises to the nucleus. Through its association with the EHMT1-EHMT2/G9A and PRC2/EED-EZH2 histone methyltransferase complexes may function in gene silencing, regulating repressive post-translational methylation of histone tails at promoters of target genes. This is Zinc finger protein 518B (ZNF518B) from Homo sapiens (Human).